We begin with the raw amino-acid sequence, 87 residues long: Citrate lyase acyl carrier protein (87 aa).

Ser-14 bears the O-(phosphoribosyl dephospho-coenzyme A)serine mark.

It belongs to the CitD family. In terms of assembly, oligomer with a subunit composition of (alpha,beta,gamma)6.

The protein localises to the cytoplasm. Functionally, covalent carrier of the coenzyme of citrate lyase. The chain is Citrate lyase acyl carrier protein from Treponema denticola (strain ATCC 35405 / DSM 14222 / CIP 103919 / JCM 8153 / KCTC 15104).